We begin with the raw amino-acid sequence, 378 residues long: Protein RecA (378 aa).

Position 65–72 (65–72 (GPESSGKT)) interacts with ATP. Residues 325-378 (AYGMDQTGEEDDQADDKSKDKATKPSDKSQAQAKPKKPVATETSLDLDDSKTDK) form a disordered region. Basic and acidic residues predominate over residues 339-351 (DDKSKDKATKPSD).

This sequence belongs to the RecA family.

It localises to the cytoplasm. In terms of biological role, can catalyze the hydrolysis of ATP in the presence of single-stranded DNA, the ATP-dependent uptake of single-stranded DNA by duplex DNA, and the ATP-dependent hybridization of homologous single-stranded DNAs. It interacts with LexA causing its activation and leading to its autocatalytic cleavage. The polypeptide is Protein RecA (Lactiplantibacillus pentosus (Lactobacillus pentosus)).